The chain runs to 358 residues: UDP-N-acetylglucosamine--N-acetylmuramyl-(pentapeptide) pyrophosphoryl-undecaprenol N-acetylglucosamine transferase (358 aa).

Residues 10–12, asparagine 124, arginine 165, serine 187, isoleucine 243, and glutamine 288 contribute to the UDP-N-acetyl-alpha-D-glucosamine site; that span reads TGG.

It belongs to the glycosyltransferase 28 family. MurG subfamily.

It is found in the cell inner membrane. The catalysed reaction is di-trans,octa-cis-undecaprenyl diphospho-N-acetyl-alpha-D-muramoyl-L-alanyl-D-glutamyl-meso-2,6-diaminopimeloyl-D-alanyl-D-alanine + UDP-N-acetyl-alpha-D-glucosamine = di-trans,octa-cis-undecaprenyl diphospho-[N-acetyl-alpha-D-glucosaminyl-(1-&gt;4)]-N-acetyl-alpha-D-muramoyl-L-alanyl-D-glutamyl-meso-2,6-diaminopimeloyl-D-alanyl-D-alanine + UDP + H(+). It functions in the pathway cell wall biogenesis; peptidoglycan biosynthesis. Its function is as follows. Cell wall formation. Catalyzes the transfer of a GlcNAc subunit on undecaprenyl-pyrophosphoryl-MurNAc-pentapeptide (lipid intermediate I) to form undecaprenyl-pyrophosphoryl-MurNAc-(pentapeptide)GlcNAc (lipid intermediate II). The sequence is that of UDP-N-acetylglucosamine--N-acetylmuramyl-(pentapeptide) pyrophosphoryl-undecaprenol N-acetylglucosamine transferase from Syntrophotalea carbinolica (strain DSM 2380 / NBRC 103641 / GraBd1) (Pelobacter carbinolicus).